Here is a 1180-residue protein sequence, read N- to C-terminus: Phosphatidylinositol 4-kinase (1180 aa).

Positions 1 to 206 (MNKISDTIII…SVYLHSPSTS (206 aa)) constitute a PIK helical domain. Disordered regions lie at residues 15-84 (NEDE…KHKE), 257-327 (ENDH…ENDN), 355-391 (TSPI…NNIN), 768-799 (TISN…IPHS), and 832-894 (AISP…SPFG). A compositionally biased stretch (low complexity) spans 38-74 (NNNNNNILTNVNNNKNNTITSSGGSDSSSSSSNNNNN). Basic residues predominate over residues 75–84 (KIKKSKKHKE). A compositionally biased stretch (basic and acidic residues) spans 257-270 (ENDHHIENDPKKDI). 4 stretches are compositionally biased toward low complexity: residues 271 to 325 (NSNN…SGEN), 364 to 391 (NNNN…NNIN), 768 to 793 (TISN…PTLP), and 835 to 879 (PPSQ…SPTN). Residues 895–1164 (ESWQEKIERY…LISYSIDHFK (270 aa)) enclose the PI3K/PI4K catalytic domain. A G-loop region spans residues 901 to 907 (IERYKKI). The segment at 1030–1038 (QIKDRHNGN) is catalytic loop. Residues 1049–1073 (HIDFGFILSNSPGNISFESAPFKLT) form an activation loop region.

Belongs to the PI3/PI4-kinase family. Type III PI4K subfamily.

It carries out the reaction a 1,2-diacyl-sn-glycero-3-phospho-(1D-myo-inositol) + ATP = a 1,2-diacyl-sn-glycero-3-phospho-(1D-myo-inositol 4-phosphate) + ADP + H(+). In terms of biological role, acts on phosphatidylinositol (PtdIns) in the first committed step in the production of the second messenger inositol-1,4,5,-trisphosphate. This is Phosphatidylinositol 4-kinase (pikD) from Dictyostelium discoideum (Social amoeba).